The primary structure comprises 242 residues: C-reactive protein 1.4 (242 aa).

An N-terminal signal peptide occupies residues 1–24; the sequence is MKTFHGPTFGTAVFLYLLLFLTSA. One can recognise a Pentraxin (PTX) domain in the interval 30-241; the sequence is ITSKVKFPPS…GVVLSPNEIC (212 aa). Phosphocholine is bound by residues Thr-60 and Tyr-63. 2 cysteine pairs are disulfide-bonded: Cys-62–Cys-125 and Cys-112–Cys-144. Ca(2+) contacts are provided by Asp-85 and Asn-86. Asn-147 is a glycosylation site (N-linked (GlcNAc...) asparagine). The Ca(2+) site is built by Glu-168, Gln-169, Asp-170, and Gln-180. A disulfide bridge links Cys-207 with Cys-241.

The protein belongs to the pentraxin family. Homopentamer. Pentraxin (or pentaxin) have a discoid arrangement of 5 non-covalently bound subunits. Ca(2+) serves as cofactor.

The protein resides in the secreted. Might serve the role of immunoglobulins. This Limulus polyphemus (Atlantic horseshoe crab) protein is C-reactive protein 1.4.